A 62-amino-acid chain; its full sequence is MARKCVVTGRQTRSGNQRSHAMNSNKRNWKANVQKVRIMVDGKPKKVYVSARALKSGKVERV.

The interval 1–27 (MARKCVVTGRQTRSGNQRSHAMNSNKR) is disordered. Over residues 9–26 (GRQTRSGNQRSHAMNSNK) the composition is skewed to polar residues.

The protein belongs to the bacterial ribosomal protein bL28 family.

The polypeptide is Large ribosomal subunit protein bL28 (Oceanobacillus iheyensis (strain DSM 14371 / CIP 107618 / JCM 11309 / KCTC 3954 / HTE831)).